Consider the following 302-residue polypeptide: Oxygen-dependent coproporphyrinogen-III oxidase (302 aa).

Position 94 (S94) interacts with substrate. Positions 98 and 108 each coordinate a divalent metal cation. H108 serves as the catalytic Proton donor. 110–112 lines the substrate pocket; that stretch reads NVR. Positions 147 and 177 each coordinate a divalent metal cation. The tract at residues 242–277 is important for dimerization; that stretch reads YVEFNLVYDRGTLFGLQTGGRTESILMSMPPLVRWQ. 260–262 lines the substrate pocket; that stretch reads GGR.

Belongs to the aerobic coproporphyrinogen-III oxidase family. Homodimer. Requires a divalent metal cation as cofactor.

Its subcellular location is the cytoplasm. The catalysed reaction is coproporphyrinogen III + O2 + 2 H(+) = protoporphyrinogen IX + 2 CO2 + 2 H2O. It participates in porphyrin-containing compound metabolism; protoporphyrin-IX biosynthesis; protoporphyrinogen-IX from coproporphyrinogen-III (O2 route): step 1/1. Its function is as follows. Involved in the heme biosynthesis. Catalyzes the aerobic oxidative decarboxylation of propionate groups of rings A and B of coproporphyrinogen-III to yield the vinyl groups in protoporphyrinogen-IX. The polypeptide is Oxygen-dependent coproporphyrinogen-III oxidase (Shewanella baltica (strain OS155 / ATCC BAA-1091)).